The following is a 565-amino-acid chain: MKSPAPSRPQKMALIPACIFLYFAALSVQAEETPVTPQPPDILLGPLFNDVQNAKLFPDQKTFADAVPNSDPLMILADYRMQQNQSGFDLRHFVNVNFTLPKEGEKYVPPEGQSLREHIDGLWPVLTRSTENTEKWDSLLPLPEPYVVPGGRFREVYYWDSYFTMLGLAESGHWDKVADMVANFAHEINTYGHIPNGNRSYYLSRSQPPFFALMVELLAQHEGDAALKQYLPQMQKEYAYWMDGVENLQAGQQEKRVVKLQDGTLLNRYWDDRDTPRPESWVEDIATAKSNPNRPATEIYRDLRSAAASGWDFSSRWMDNPQQLNTLRTTSIVPVDLNSLMFKMEKILARASKAAGDNAMANQYETLANARQKGIEKYLWNDQQGWYADYDLKSHKVRNQLTAAALFPLYVNAAAKDRANKMATATKTHLLQPGGLNTTSVKSGQQWDAPNGWAPLQWVATEGLQNYGQKEVAMDISWHFLTNVQHTYDREKKLVEKYDVSTTGTGGGGGEYPLQDGFGWTNGVTLKMLDLICPKEQPCDNVPATHPTVKSATTQPSTKEAQPTP.

Residues Met-1–Ala-30 form the signal peptide. Residues Arg-152, Trp-159–Asp-160, Asn-196, Arg-205–Gln-207, Arg-277–Glu-279, and Gly-310 each bind substrate. Catalysis depends on proton donor/acceptor residues Asp-312 and Glu-496. A substrate-binding site is contributed by Glu-511. The segment at Asp-540–Pro-565 is disordered. The span at Thr-548–Pro-565 shows a compositional bias: polar residues.

Belongs to the glycosyl hydrolase 37 family. As to quaternary structure, monomer.

Its subcellular location is the periplasm. The catalysed reaction is alpha,alpha-trehalose + H2O = alpha-D-glucose + beta-D-glucose. Provides the cells with the ability to utilize trehalose at high osmolarity by splitting it into glucose molecules that can subsequently be taken up by the phosphotransferase-mediated uptake system. This Shigella flexneri serotype 5b (strain 8401) protein is Periplasmic trehalase.